We begin with the raw amino-acid sequence, 758 residues long: 5-methyltetrahydropteroyltriglutamate--homocysteine methyltransferase (758 aa).

5-methyltetrahydropteroyltri-L-glutamate contacts are provided by residues 17 to 20 and Lys-117; that span reads RELK. L-homocysteine contacts are provided by residues 434–436 and Glu-487; that span reads IGS. L-methionine-binding positions include 434–436 and Glu-487; that span reads IGS. Residues 518-519 and Trp-564 each bind 5-methyltetrahydropteroyltri-L-glutamate; that span reads RC. Asp-602 is an L-homocysteine binding site. Asp-602 contacts L-methionine. Glu-608 serves as a coordination point for 5-methyltetrahydropteroyltri-L-glutamate. Residues His-644, Cys-646, and Glu-668 each coordinate Zn(2+). His-697 (proton donor) is an active-site residue. Cys-729 lines the Zn(2+) pocket.

This sequence belongs to the vitamin-B12 independent methionine synthase family. Zn(2+) serves as cofactor.

The catalysed reaction is 5-methyltetrahydropteroyltri-L-glutamate + L-homocysteine = tetrahydropteroyltri-L-glutamate + L-methionine. It functions in the pathway amino-acid biosynthesis; L-methionine biosynthesis via de novo pathway; L-methionine from L-homocysteine (MetE route): step 1/1. Its function is as follows. Catalyzes the transfer of a methyl group from 5-methyltetrahydrofolate to homocysteine resulting in methionine formation. The chain is 5-methyltetrahydropteroyltriglutamate--homocysteine methyltransferase from Yersinia enterocolitica serotype O:8 / biotype 1B (strain NCTC 13174 / 8081).